The chain runs to 179 residues: Large ribosomal subunit protein uL5 (179 aa).

It belongs to the universal ribosomal protein uL5 family. As to quaternary structure, part of the 50S ribosomal subunit; part of the 5S rRNA/L5/L18/L25 subcomplex. Contacts the 5S rRNA and the P site tRNA. Forms a bridge to the 30S subunit in the 70S ribosome.

Its function is as follows. This is one of the proteins that bind and probably mediate the attachment of the 5S RNA into the large ribosomal subunit, where it forms part of the central protuberance. In the 70S ribosome it contacts protein S13 of the 30S subunit (bridge B1b), connecting the 2 subunits; this bridge is implicated in subunit movement. Contacts the P site tRNA; the 5S rRNA and some of its associated proteins might help stabilize positioning of ribosome-bound tRNAs. The polypeptide is Large ribosomal subunit protein uL5 (Haemophilus ducreyi (strain 35000HP / ATCC 700724)).